We begin with the raw amino-acid sequence, 300 residues long: MDAPSTTPHDAVFKQFLMHAETARDFLEIHLPVELRELCDLNTLHLESGSFIEESLKGHSTDVLYSVQMQGNPGYLHVVIEHQSKPDKKMAFRMMRYSIAAMHRHLEADHDKLPLVVPILFYQGEATPYPLSMCWFDMFYSPELARRVYNSPFPLVDITITPDDEIMQHRRIAILELLQKHIRQRDLMLLLEQLVTLIDEGYTSGSQLVAMQNYMLQRGHTEQADLFYGVLRDRETGGESMMTLAQWFEEKGIEKGIQQGRQEVSQEFAQRLLSKGMSREDVAEMANLPLAEIDKVINLI.

Belongs to the Rpn/YhgA-like nuclease family.

Functionally, a low activity DNA endonuclease yielding 3'-hydroxyl ends. Upon expression enhances RecA-independent DNA recombination 2.9-fold, concomitantly reducing viability by 59% and inducing DNA damage as measured by induction of the SOS repair response. This Escherichia coli (strain K12) protein is Recombination-promoting nuclease RpnC.